We begin with the raw amino-acid sequence, 849 residues long: Putative respiratory burst oxidase homolog protein G (849 aa).

Basic and acidic residues predominate over residues 1–17 (MQRVSFEVKDTEAEKSS). The interval 1–53 (MQRVSFEVKDTEAEKSSSEILSGSLPSTYRNPAMENVGNAVDDGSSVKNNPKL) is disordered. The Cytoplasmic segment spans residues 1–303 (MQRVSFEVKD…RFFVLDSWQR (303 aa)). The span at 18–27 (SEILSGSLPS) shows a compositional bias: low complexity. 2 EF-hand-like regions span residues 118 to 128 (TANTDGLLLRS) and 153 to 164 (SHLKGDVITETE). EF-hand domains are found at residues 176–211 (SFDSRLITFFDLMDKDSDGRLTEDEVREIIKLSSSA) and 220–255 (KADEYAAMIMEELDPDHMGYIMMESLKKLLLQAETK). Residues Asp189, Asp191, Asp193, Arg195, and Glu200 each coordinate Ca(2+). Ser270 carries the post-translational modification Phosphoserine. A helical membrane pass occupies residues 304–324 (VWVIALWLTIMAILFAYKYIQ). Residues 325 to 392 (YKNRAVYEVL…LNFHKVIAVG (68 aa)) are Extracellular-facing. Residues 342 to 502 (KGAAETLKLN…LFVIVYILLV (161 aa)) form the Ferric oxidoreductase domain. Residues 393 to 409 (IAIGVAIHSVSHLACDF) traverse the membrane as a helical segment. At 410-444 (PLLIAATPAEYMPLGKFFGEEQPKRYLHFVKSTEG) the chain is on the cytoplasmic side. Residues 445–465 (ITGLVMVFLMVIAFTLAMPWF) form a helical membrane-spanning segment. The Extracellular portion of the chain corresponds to 466–489 (RRGKLEKKLPGPLKKLASFNAFWY). The helical transmembrane segment at 490-510 (THHLFVIVYILLVLHGYYIYL) threads the bilayer. Residues 511–518 (NKEWYKKT) lie on the Cytoplasmic side of the membrane. A helical membrane pass occupies residues 519–536 (TWMYLAVPVALYAYERLI). At 537–659 (RAFRSSIRTV…PYGAPAQDYK (123 aa)) the chain is on the extracellular side. An FAD-binding FR-type domain is found at 541-657 (SSIRTVKVLK…DGPYGAPAQD (117 aa)). A helical membrane pass occupies residues 660–680 (KYEVVLLIGLGIGATPMISII). The Cytoplasmic portion of the chain corresponds to 681 to 849 (KDIINNTETK…TRFSFHKENF (169 aa)).

This sequence belongs to the RBOH (TC 5.B.1.3) family. In terms of assembly, monomer and homodimer.

It localises to the membrane. Functionally, calcium-dependent NADPH oxidase that generates superoxide. The polypeptide is Putative respiratory burst oxidase homolog protein G (RBOHG) (Arabidopsis thaliana (Mouse-ear cress)).